The primary structure comprises 203 residues: A-type ATP synthase subunit E (203 aa).

It belongs to the V-ATPase E subunit family. In terms of assembly, has multiple subunits with at least A(3), B(3), C, D, E, F, H, I and proteolipid K(x).

It is found in the cell membrane. Component of the A-type ATP synthase that produces ATP from ADP in the presence of a proton gradient across the membrane. This is A-type ATP synthase subunit E from Methanococcus maripaludis (strain C7 / ATCC BAA-1331).